Reading from the N-terminus, the 181-residue chain is Adenylate kinase (181 aa).

Residue 10–15 (GAGKGT) coordinates ATP. Positions 30-59 (STGDLFRKNIGDGTPLGLEAKRYLDAGDLV) are NMP. AMP-binding positions include Thr31, Arg36, 57 to 59 (DLV), 85 to 88 (GYPR), and Gln92. Positions 126–132 (GRGRADD) are LID. Arg127 lines the ATP pocket. Residues Arg129 and Arg140 each coordinate AMP. Residue Gly166 coordinates ATP.

This sequence belongs to the adenylate kinase family. Monomer.

Its subcellular location is the cytoplasm. The catalysed reaction is AMP + ATP = 2 ADP. It functions in the pathway purine metabolism; AMP biosynthesis via salvage pathway; AMP from ADP: step 1/1. Functionally, catalyzes the reversible transfer of the terminal phosphate group between ATP and AMP. Plays an important role in cellular energy homeostasis and in adenine nucleotide metabolism. The polypeptide is Adenylate kinase (Mycolicibacterium smegmatis (strain ATCC 700084 / mc(2)155) (Mycobacterium smegmatis)).